The following is a 393-amino-acid chain: Trehalose import ATP-binding protein SugC (393 aa).

One can recognise an ABC transporter domain in the interval 4–235; that stretch reads IVLDHVNKSY…PANLFVAGFI (232 aa). An ATP-binding site is contributed by 37–44; that stretch reads GPSGCGKT. The short motif at 135–139 is the Helical C-loop; LSGGQ motif element; sequence LSGGQ.

The protein belongs to the ABC transporter superfamily. As to quaternary structure, monomer. Homodimerizes in the presence of ATP. The complex is composed of two ATP-binding proteins (SugC), two transmembrane proteins (SugA and SugB) and a solute-binding protein (LpqY).

The protein resides in the cell inner membrane. The catalysed reaction is alpha,alpha-trehalose(out) + ATP + H2O = alpha,alpha-trehalose(in) + ADP + phosphate + H(+). Part of the ABC transporter complex LpqY-SugA-SugB-SugC, which is highly specific for uptake of trehalose. Involved in the recycling of extracellular trehalose released from trehalose-containing molecules synthesized by M.tuberculosis. Trehalose uptake is essential for virulence. Responsible for energy coupling to the transport system. In Mycobacterium tuberculosis (strain CDC 1551 / Oshkosh), this protein is Trehalose import ATP-binding protein SugC (sugC).